Here is a 335-residue protein sequence, read N- to C-terminus: GTPase Obg (335 aa).

One can recognise an Obg domain in the interval 1-158 (MFVDQITLEL…RQVELELKLI (158 aa)). The interval 126–145 (NTFFKTSVNRAPTKATPGKP) is disordered. The 176-residue stretch at 159 to 334 (ADIGLVGFPN…LYRFFTQRLA (176 aa)) folds into the OBG-type G domain. Residues 165–172 (GFPNAGKS), 190–194 (FTTLA), 215–218 (DIPG), 285–288 (NKID), and 315–317 (SGL) each bind GTP. 2 residues coordinate Mg(2+): serine 172 and threonine 192.

Belongs to the TRAFAC class OBG-HflX-like GTPase superfamily. OBG GTPase family. In terms of assembly, monomer. Requires Mg(2+) as cofactor.

It is found in the cytoplasm. Functionally, an essential GTPase which binds GTP, GDP and possibly (p)ppGpp with moderate affinity, with high nucleotide exchange rates and a fairly low GTP hydrolysis rate. Plays a role in control of the cell cycle, stress response, ribosome biogenesis and in those bacteria that undergo differentiation, in morphogenesis control. The polypeptide is GTPase Obg (Chlamydia pneumoniae (Chlamydophila pneumoniae)).